The sequence spans 308 residues: MAFSLQLQQIFVSYTRFCSQPKSITNPLISLKLPSIHPLAFAQNAAVSNIDTGVAAIDGSAEEVSLPPQLRRELMPKHVALIMDGNRRWAKMRGLPVALGYEAGIRAVRKIIELCGNWGIMVLTLFAFSSDNWLRPKVEVDILMSLFERALNDELENFAREGIRISIIGDSSKLPKSLQDLIAKAVKTTKENSRLHLVVAVNYSGQHDVVQACQTIAQKVKDDIIETKDINSFLIEQELQTNCIDFPCPDLLIRTSGELRLSNFLLWQLAYSELFFSHSHWPDFGEAEFLEALCSFQQRQRRYGRQSS.

A chloroplast-targeting transit peptide spans 1–45 (MAFSLQLQQIFVSYTRFCSQPKSITNPLISLKLPSIHPLAFAQNA). Aspartate 84 is a catalytic residue.

Belongs to the UPP synthase family. Mg(2+) serves as cofactor. In terms of tissue distribution, widely expressed.

Its subcellular location is the plastid. The protein localises to the chloroplast. Uses neryl diphosphate and geranyl diphosphate to catalyze the cis-prenyl chain elongation and produce polyprenyl diphosphate with a chain of 55 carbons. This Solanum lycopersicum (Tomato) protein is Cis-prenyltransferase 4, chloroplastic.